The sequence spans 433 residues: Serine--tRNA ligase (433 aa).

235–237 contacts L-serine; the sequence is TSE. An ATP-binding site is contributed by 266-268; it reads RSE. L-serine is bound at residue Glu289. ATP is bound at residue 353-356; sequence EISS. Ser388 is an L-serine binding site.

It belongs to the class-II aminoacyl-tRNA synthetase family. Type-1 seryl-tRNA synthetase subfamily. As to quaternary structure, homodimer. The tRNA molecule binds across the dimer.

It is found in the cytoplasm. The enzyme catalyses tRNA(Ser) + L-serine + ATP = L-seryl-tRNA(Ser) + AMP + diphosphate + H(+). The catalysed reaction is tRNA(Sec) + L-serine + ATP = L-seryl-tRNA(Sec) + AMP + diphosphate + H(+). It functions in the pathway aminoacyl-tRNA biosynthesis; selenocysteinyl-tRNA(Sec) biosynthesis; L-seryl-tRNA(Sec) from L-serine and tRNA(Sec): step 1/1. Functionally, catalyzes the attachment of serine to tRNA(Ser). Is also able to aminoacylate tRNA(Sec) with serine, to form the misacylated tRNA L-seryl-tRNA(Sec), which will be further converted into selenocysteinyl-tRNA(Sec). The sequence is that of Serine--tRNA ligase from Burkholderia orbicola (strain MC0-3).